The primary structure comprises 481 residues: Zygotic gap protein knirps (481 aa).

The nuclear receptor DNA-binding region spans 2-78 (NQTCKVCGEP…VGMSKGGSRY (77 aa)). 2 NR C4-type zinc fingers span residues 5–25 (CKVC…CEGC) and 42–66 (CKND…LRKC). Composition is skewed to low complexity over residues 100-111 (AAAGKAPGHATG), 127-148 (QQQQ…QQQQ), 245-264 (TPPT…AASP), 316-335 (SHSS…SPLS), and 420-440 (TTNS…TSST). Disordered stretches follow at residues 100–161 (AAAG…GYTG), 231–294 (SVDS…PHTI), 308–336 (LLPG…PLSF), and 420–442 (TTNS…STEA).

This sequence belongs to the nuclear hormone receptor family. NR0 subfamily.

It is found in the nucleus. Its function is as follows. Transcriptional repressor. Binds to multiple sites in the eve stripe 3 enhancer element. Plays an essential role in the segmentation process both by refining the expression patterns of gap genes and by establishing pair-rules stripes of gene expression. This Drosophila virilis (Fruit fly) protein is Zygotic gap protein knirps (kni).